We begin with the raw amino-acid sequence, 124 residues long: Non-structural protein 2 (124 aa).

A DLNP; interaction with MAP1B motif is present at residues D121 to P124.

This sequence belongs to the pneumovirus non-structural protein 2 family. In terms of assembly, monomer (instable). Homomultimer. Heteromultimer with NS1. Interacts with host RIGI (via N-terminus); this interaction prevents host signaling pathway involved in interferon production. Interacts with host MAP1B/microtubule-associated protein 1B.

It is found in the host mitochondrion. Plays a major role in antagonizing the type I IFN-mediated antiviral response. Acts cooperatively with NS1 to repress activation and nuclear translocation of host IFN-regulatory factor IRF3. Interacts with the host cytoplasmic sensor of viral nucleic acids RIGI and prevents the interaction with its downstream partner MAVS. Together with NS2, participates in the proteasomal degradation of host STAT2, IRF3, IRF7, TBK1 and RIGI through a NS-degradasome involving CUL2 and Elongin-C. The degradasome requires an intact mitochondrial MAVS. Induces host SOCS1 expression. Induces activation of NF-kappa-B. Suppresses premature apoptosis by an NF-kappa-B-dependent, interferon-independent mechanism promoting continued viral replication. This Human respiratory syncytial virus B (strain 18537) protein is Non-structural protein 2 (1B).